The sequence spans 101 residues: Osteocalcin (101 aa).

The first 19 residues, 1-19 (MKLAILTVLLLGAAVLCLG), serve as a signal peptide directing secretion. Positions 20–52 (SKDADHSNSVGESHSSEAFISRQESASFARLKR) are excised as a propeptide. Residues 53–99 (SYGNNVGQGAAVGSPLESQREVCELNPDCDELADHIGFQEAYRRFYG) enclose the Gla domain. Ca(2+)-binding residues include Glu69, Glu73, Glu76, and Asp82. A 4-carboxyglutamate mark is found at Glu69, Glu73, and Glu76. A disulfide bond links Cys75 and Cys81.

The protein belongs to the osteocalcin/matrix Gla protein family. In terms of processing, gamma-carboxyglutamate residues are formed by vitamin K dependent carboxylation by GGCX. These residues are essential for the binding of calcium.

The protein resides in the secreted. The carboxylated form is one of the main organic components of the bone matrix, which constitutes 1-2% of the total bone protein. The carboxylated form binds strongly to apatite and calcium. The chain is Osteocalcin (bglap) from Xenopus laevis (African clawed frog).